A 416-amino-acid polypeptide reads, in one-letter code: Basic salivary proline-rich protein 2 (416 aa).

Residues 1–16 (MLLILLSVALLALSSA) form the signal peptide. Gln-17 carries the pyrrolidone carboxylic acid modification. Residues 19–28 (LNEDVSQEES) are compositionally biased toward polar residues. Residues 19 to 416 (LNEDVSQEES…QGGRPSRPPQ (398 aa)) are disordered. The residue at position 24 (Ser-24) is a Phosphoserine. Residues 34–47 (GNPQGAPPQGGNKP) show a composition bias toward low complexity. Composition is skewed to pro residues over residues 48 to 104 (QGPP…PPPQ) and 112 to 165 (RSPP…PPPQ). Ser-52 bears the Phosphoserine mark. 15 tandem repeats follow at residues 53–72 (PPGK…QGPP), 74–93 (PPGK…QGPP), 94–113 (PPGK…SPRS), 114–133 (PPGK…QGPP), 135–154 (PPGK…QGPP), 155–174 (PPGK…RSSR), 176–195 (PPGK…QGPP), 197–216 (PPGK…QGPP), 217–236 (PPGK…QSAR), 238–257 (PPGK…QGPP), 259–278 (PPGK…QGPP), 279–298 (PPGK…RSSR), 300–319 (PPGK…QGPP), 321–340 (PPGK…QGPP), and 341–360 (PPGK…RSAR). Residues 53–360 (PPGKPQGPPP…QGGSKSRSAR (308 aa)) form a 15 X 20 AA approximate tandem repeats of P-P-G-K-P-Q-G-P-P-P-Q-G-[GD]-[NKS]-[KSQ]-[PRS]-[QRS] [GPS]-[PSAR]-[PSR] region. N-linked (GlcNAc...) asparagine glycosylation is present at Asn-168. A compositionally biased stretch (pro residues) spans 177-227 (PGKPQGPPPQGGNQPQGPPPPPGKPQGPPPQGGNKPQGPPPPGKPQGPPPQ). Asn-230 carries an N-linked (GlcNAc...) asparagine glycan. Ser-232 is a glycosylation site (O-linked (Hex) serine). Residues 239-289 (PGKPQGPPPQGGNQPQGPPPPPGKPQGPPPQGGNKPQGPPPPGKPQGPPPQ) are compositionally biased toward pro residues. Asn-272 carries N-linked (GlcNAc...) asparagine glycosylation. A compositionally biased stretch (low complexity) spans 290–300 (GGSKSRSSRSP). 2 stretches are compositionally biased toward pro residues: residues 301–351 (PGKP…PPPQ) and 378–416 (QGPP…RPPQ).

In terms of processing, N- and O-glycosylated. In head and neck cancer patients, O-glycosylated with glucosylgalactosyl carbohydrate moiety. This modification would require prior hydroxylation on the lysine residue. Proteolytically cleaved at the tripeptide Xaa-Pro-Gln, where Xaa in the P(3) position is mostly lysine. The endoprotease may be of microbial origin. Post-translationally, pyroglutamate formation occurs on terminal Gln residues of cleaved peptides. Pyroglutamate formation found on at least Gln-398 and Gln-400.

Its subcellular location is the secreted. This Homo sapiens (Human) protein is Basic salivary proline-rich protein 2 (PRB2).